The primary structure comprises 79 residues: Large ribosomal subunit protein bL31 (79 aa).

Residues Cys-16, Cys-18, Cys-37, and Cys-40 each coordinate Zn(2+).

Belongs to the bacterial ribosomal protein bL31 family. Type A subfamily. As to quaternary structure, part of the 50S ribosomal subunit. Zn(2+) is required as a cofactor.

In terms of biological role, binds the 23S rRNA. This Coxiella burnetii (strain CbuG_Q212) (Coxiella burnetii (strain Q212)) protein is Large ribosomal subunit protein bL31.